Reading from the N-terminus, the 211-residue chain is Neuroendocrine protein 7B2 (211 aa).

Residues 1 to 26 form the signal peptide; it reads MVSRMVSTMLSGLLFWLASGWTPAFA. A disordered region spans residues 106–132; that stretch reads DFSEDQGYPDPPNPCPVGKTDDGCLEN. An intrachain disulfide couples C120 to C129. A phosphoserine mark is found at S140 and S204. Residues 173 to 211 are disordered; sequence GGERRKRRSVNPYLQGQRLDNVVAKKSVPHFSDEDKDPE.

This sequence belongs to the 7B2 family. As to quaternary structure, interacts with PCSK2/PC2 early in the secretory pathway. Dissociation occurs at later stages. In terms of processing, proteolytically cleaved in the Golgi by a furin-like convertase to generate bioactive peptides. Post-translationally, sulfated on tyrosine residues.

It localises to the secreted. Functionally, acts as a molecular chaperone for PCSK2/PC2, preventing its premature activation in the regulated secretory pathway. Binds to inactive PCSK2 in the endoplasmic reticulum and facilitates its transport from there to later compartments of the secretory pathway where it is proteolytically matured and activated. Also required for cleavage of PCSK2 but does not appear to be involved in its folding. Plays a role in regulating pituitary hormone secretion. The C-terminal peptide inhibits PCSK2 in vitro. In Pan troglodytes (Chimpanzee), this protein is Neuroendocrine protein 7B2 (SCG5).